The chain runs to 185 residues: Ribosome-recycling factor (185 aa).

Belongs to the RRF family.

The protein localises to the cytoplasm. Its function is as follows. Responsible for the release of ribosomes from messenger RNA at the termination of protein biosynthesis. May increase the efficiency of translation by recycling ribosomes from one round of translation to another. This Idiomarina loihiensis (strain ATCC BAA-735 / DSM 15497 / L2-TR) protein is Ribosome-recycling factor.